We begin with the raw amino-acid sequence, 341 residues long: Protein quaking-A (341 aa).

The region spanning 87–153 is the KH domain; sequence FVPVKEYPDY…WEHLNEDLHV (67 aa). The SH3-binding motif lies at 276–279; sequence PPTP. The Nuclear localization signal motif lies at 324 to 330; it reads RVHPYQR.

The protein belongs to the quaking family. Homodimer; does not require RNA to homodimerize.

It is found in the cytoplasm. The protein localises to the nucleus. Its function is as follows. RNA reader protein, which recognizes and binds specific RNAs, thereby regulating RNA metabolic processes, such as pre-mRNA splicing, circular RNA (circRNA) formation, mRNA export, mRNA stability and/or translation. Involved in various cellular processes, such as mRNA storage into stress granules, apoptosis, interferon response, glial cell fate and development. Binds to the 5'-NACUAAY-N(1,20)-UAAY-3' RNA core sequence. Acts as a mRNA modification reader that specifically recognizes and binds mRNA transcripts modified by internal N(7)-methylguanine (m7G). Promotes the formation of circular RNAs (circRNAs): acts by binding to sites flanking circRNA-forming exons. CircRNAs are produced by back-splicing circularization of pre-mRNAs. Required to protect and promote stability of mRNAs which promotes oligodendrocyte differentiation. Acts as an important regulator of muscle development: required during early skeletal myofibril formation by regulating the accumulation of the muscle-specific tropomyosin-3 (tpm3) transcripts. This Danio rerio (Zebrafish) protein is Protein quaking-A.